The chain runs to 28 residues: Endoglucanase (28 aa).

The Nucleophile role is filled by Glu20.

Belongs to the glycosyl hydrolase 5 (cellulase A) family.

Its subcellular location is the cell membrane. The catalysed reaction is Endohydrolysis of (1-&gt;4)-beta-D-glucosidic linkages in cellulose, lichenin and cereal beta-D-glucans.. This is Endoglucanase from Schizophyllum commune (Split gill fungus).